A 220-amino-acid polypeptide reads, in one-letter code: Large ribosomal subunit protein bL25 (220 aa).

Belongs to the bacterial ribosomal protein bL25 family. CTC subfamily. Part of the 50S ribosomal subunit; part of the 5S rRNA/L5/L18/L25 subcomplex. Contacts the 5S rRNA. Binds to the 5S rRNA independently of L5 and L18.

Functionally, this is one of the proteins that binds to the 5S RNA in the ribosome where it forms part of the central protuberance. This Zymomonas mobilis subsp. mobilis (strain ATCC 31821 / ZM4 / CP4) protein is Large ribosomal subunit protein bL25.